Reading from the N-terminus, the 211-residue chain is tRNA (guanine-N(7)-)-methyltransferase (211 aa).

Positions 44, 69, 96, and 118 each coordinate S-adenosyl-L-methionine. The active site involves Asp-118. Lys-122 provides a ligand contact to substrate. Residues 124 to 129 form an interaction with RNA region; sequence KHEKRR. Substrate-binding positions include Asp-154 and 191–194; that span reads TEYE.

Belongs to the class I-like SAM-binding methyltransferase superfamily. TrmB family.

The enzyme catalyses guanosine(46) in tRNA + S-adenosyl-L-methionine = N(7)-methylguanosine(46) in tRNA + S-adenosyl-L-homocysteine. Its pathway is tRNA modification; N(7)-methylguanine-tRNA biosynthesis. Catalyzes the formation of N(7)-methylguanine at position 46 (m7G46) in tRNA. This Streptococcus uberis (strain ATCC BAA-854 / 0140J) protein is tRNA (guanine-N(7)-)-methyltransferase.